The sequence spans 245 residues: 8-amino-3,8-dideoxy-manno-octulosonate cytidylyltransferase (245 aa).

The protein belongs to the KdsB family.

It localises to the cytoplasm. The enzyme catalyses 8-amino-3,8-dideoxy-alpha-D-manno-octulosonate + CTP = CMP-8-amino-3,8-dideoxy-alpha-D-manno-oct-2-ulosonate + diphosphate. It participates in bacterial outer membrane biogenesis; lipopolysaccharide biosynthesis. Its function is as follows. Activates KDO8N (a required 8-carbon sugar) for incorporation into bacterial lipopolysaccharide in the Shewanella genus. The sequence is that of 8-amino-3,8-dideoxy-manno-octulosonate cytidylyltransferase from Shewanella putrefaciens (strain CN-32 / ATCC BAA-453).